We begin with the raw amino-acid sequence, 566 residues long: OTU domain-containing protein 5 (566 aa).

2 disordered regions span residues 1–117 and 146–175; these read MTIL…GDAL and PGHS…GAGY. Residues 11–30 are compositionally biased toward pro residues; the sequence is PPDADPANEPPPPGPLPPAP. Positions 32–47 are enriched in gly residues; it reads RGGGVGVGGGGTGVGG. Residues 63-75 are compositionally biased toward pro residues; it reads ASPPPQGPLPGPP. Serine 64 bears the Phosphoserine mark. A compositionally biased stretch (low complexity) spans 84–97; that stretch reads AVPPGAVAGPRPQQ. Positions 105 to 115 are enriched in gly residues; sequence GPGGPGGGPGD. Serine 165 carries the phosphoserine modification. Tyrosine 175 is modified (phosphotyrosine). The residue at position 177 (serine 177) is a Phosphoserine. Threonine 195 is subject to Phosphothreonine. The region spanning 213-336 is the OTU domain; that stretch reads FIIKQMKEDG…NIHYNSVVNP (124 aa). Positions 218–224 are cys-loop; that stretch reads MKEDGAC. Aspartate 221 is an active-site residue. The active-site Nucleophile is the cysteine 224. The tract at residues 273 to 283 is variable-loop; it reads KRKNNCHGNHI. At serine 323 the chain carries Phosphoserine. Residues 324–329 form a his-loop region; that stretch reads YHRNIH. Histidine 329 is an active-site residue. Residues serine 332 and serine 370 each carry the phosphoserine modification. The segment at 413–497 is disordered; it reads ARQVRGPSQP…PGTSSQFSAG (85 aa). Low complexity-rich tracts occupy residues 425–438 and 445–457; these read ASAT…AASS and SRSP…ASSP. Position 447 is a phosphoserine (serine 447). The residue at position 502 (threonine 502) is a Phosphothreonine. Serine 503 carries the phosphoserine modification.

The protein belongs to the peptidase C85 family. Interacts with TRAF3. In terms of processing, phosphorylation at Ser-177 is required for deubiquitinating activity. Phosphorylation at Ser-323, Ser-332 and Ser-503 by MTOR promotes its activity.

It is found in the nucleus. The enzyme catalyses Thiol-dependent hydrolysis of ester, thioester, amide, peptide and isopeptide bonds formed by the C-terminal Gly of ubiquitin (a 76-residue protein attached to proteins as an intracellular targeting signal).. Inhibited by N-ethyl-maleimide (NEM). Functionally, deubiquitinating enzyme that functions as a negative regulator of the innate immune system. Has peptidase activity towards 'Lys-48'- and 'Lys-63'-linked polyubiquitin chains. Can also cleave 'Lys-11'-linked ubiquitin chains (in vitro). Acts via TRAF3 deubiquitination and subsequent suppression of type I interferon (IFN) production. Controls neuroectodermal differentiation through cleaving 'Lys-48'-linked ubiquitin chains to counteract degradation of select chromatin regulators such as ARID1A, HDAC2 and HCF1. Acts as a positive regulator of mTORC1 and mTORC2 signaling following phosphorylation by MTOR: acts by mediating deubiquitination of BTRC, leading to its stability. This is OTU domain-containing protein 5 from Rattus norvegicus (Rat).